The chain runs to 87 residues: Guanine nucleotide-binding protein subunit gamma (87 aa).

Cysteine 84 carries the cysteine methyl ester modification. Cysteine 84 carries the S-geranylgeranyl cysteine lipid modification. A propeptide spans 85–87 (removed in mature form); sequence LLV.

The protein belongs to the G protein gamma family. G proteins are composed of 3 units, alpha, beta and gamma. The N-terminus is blocked.

The protein resides in the cell membrane. Its function is as follows. Guanine nucleotide-binding proteins (G proteins) are involved as a modulator or transducer in various transmembrane signaling systems. This major G-protein of the squid photoreceptor is involved in visual transduction. The beta and gamma chains are required for the GTPase activity, for replacement of GDP by GTP, and for G protein-effector interaction. This Loligo forbesii (Veined squid) protein is Guanine nucleotide-binding protein subunit gamma.